Here is a 390-residue protein sequence, read N- to C-terminus: Putative nickel insertion protein (390 aa).

This sequence belongs to the LarC family.

The sequence is that of Putative nickel insertion protein from Myxococcus xanthus (strain DK1622).